We begin with the raw amino-acid sequence, 525 residues long: Acetyl-CoA hydrolase (525 aa).

CoA is bound at residue 280–284 (GIGNI). The active-site 5-glutamyl coenzyme A thioester intermediate is the E305. Residues N395 and G399 each coordinate CoA.

Belongs to the acetyl-CoA hydrolase/transferase family.

It localises to the cytoplasm. It carries out the reaction acetyl-CoA + H2O = acetate + CoA + H(+). Required for utilization of acetate. The sequence is that of Acetyl-CoA hydrolase (acu-8) from Neurospora crassa (strain ATCC 24698 / 74-OR23-1A / CBS 708.71 / DSM 1257 / FGSC 987).